The sequence spans 122 residues: UPF0102 protein VIBHAR_00890 (122 aa).

It belongs to the UPF0102 family.

The polypeptide is UPF0102 protein VIBHAR_00890 (Vibrio campbellii (strain ATCC BAA-1116)).